Consider the following 33-residue polypeptide: Zinc metalloproteinase-disintegrin-like moojenin (33 aa).

In terms of domain architecture, Disintegrin spans proline 8 to glutamate 33. Residues valine 10, asparagine 13, leucine 15, glutamate 17, glutamate 20, and aspartate 23 each coordinate Ca(2+). Disulfide bonds link cysteine 11-cysteine 30 and cysteine 24-cysteine 30.

This sequence belongs to the venom metalloproteinase (M12B) family. P-III subfamily. P-IIIb sub-subfamily. As to quaternary structure, monomer. The cofactor is Zn(2+). The N-terminus (from the N-terminal region of the metalloproteinase domain) is blocked. As to expression, expressed by the venom gland.

The protein localises to the secreted. The fibrinogenolytic and coagulant activities of the moojenin were abolished by preincubation with EDTA, 1,10-phenanthroline and beta-mercaptoethanol. In terms of biological role, metalloproteinase moojenin: snake venom metalloproteinase that cleaves both alpha- and beta-chains of fibrinogen, but not the gamma-chain. Shows a coagulant activity on bovine plasma about 3.1 fold lower than crude venom. Renders the blood incoagulable when intraperitoneally administered into mice. Induces necrosis in liver and muscle, but does not cause histological alterations in mouse lungs, kidney or heart. This chain is Zinc metalloproteinase-disintegrin-like moojenin, found in Bothrops moojeni (Lance-headed viper).